The primary structure comprises 460 residues: CUGBP Elav-like family member 6 (460 aa).

Residues 1–10 are compositionally biased toward low complexity; it reads MAAAPGGSAP. Positions 1 to 37 are disordered; it reads MAAAPGGSAPPAGPSPRLAFSTADSGGGMSGLNPGPA. RRM domains lie at 46–127 and 134–214; these read IKLF…PAAS and RKLF…LADT. The tract at residues 316–336 is disordered; that stretch reads NGFGSLTPQSNGQPGSDTLYN. Positions 319 to 336 are enriched in polar residues; sequence GSLTPQSNGQPGSDTLYN. Residues 375–453 form the RRM 3 domain; that stretch reads CNLFIYHLPQ…KRLKVQLKRP (79 aa).

The protein belongs to the CELF/BRUNOL family.

The protein resides in the nucleus. It is found in the cytoplasm. In terms of biological role, RNA-binding protein implicated in the regulation of pre-mRNA alternative splicing. Mediates exon inclusion and/or exclusion in pre-mRNA that are subject to tissue-specific and developmentally regulated alternative splicing. Specifically activates exon 5 inclusion of TNNT2 in a muscle-specific splicing enhancer (MSE)-dependent manner. Promotes also exon exclusion of INSR pre-mRNA. In Mus musculus (Mouse), this protein is CUGBP Elav-like family member 6 (Celf6).